Here is a 57-residue protein sequence, read N- to C-terminus: uncharacterized protein (57 aa).

Residues 15 to 37 (GLAGLICIGLTISSGFSGSSILI) traverse the membrane as a helical segment.

The protein localises to the membrane. This is an uncharacterized protein from Dictyostelium discoideum (Social amoeba).